We begin with the raw amino-acid sequence, 352 residues long: Popeye domain-containing protein 1 (352 aa).

Residues 1 to 38 (MSNTTSALPSSVPAVSLDPNATLCQDWEQSHHLLFHLA) are Extracellular-facing. Asn-3 and Asn-20 each carry an N-linked (GlcNAc...) asparagine glycan. A helical transmembrane segment spans residues 39–59 (NLSLGLGFLIPTTLALHMIFL). A topological domain (cytoplasmic) is located at residue Arg-60. The helical transmembrane segment at 61-81 (LLLMTGCSLFIAWATLYRCTL) threads the bilayer. Position 82 (Asp-82) is a topological domain, extracellular. Residues 83-103 (VMVWNVVFLLVNFMHFFFLLY) form a helical membrane-spanning segment. The Cytoplasmic portion of the chain corresponds to 104–352 (KRRPIKIDRE…NVSKTTKKDI (249 aa)). A disordered region spans residues 299-352 (ILRGGSTGSSLQKNPLTKTSTTMKPIEEGLEDDVFESESPTTSQNVSKTTKKDI). Polar residues-rich tracts occupy residues 306 to 321 (GSSL…STTM) and 336 to 346 (ESPTTSQNVSK).

The protein belongs to the popeye family. As to expression, expressed in skeletal muscle (at protein level).

Its subcellular location is the lateral cell membrane. The protein resides in the cell junction. It is found in the tight junction. The protein localises to the membrane. It localises to the cell membrane. Its subcellular location is the sarcolemma. The protein resides in the caveola. Its function is as follows. Cell adhesion molecule involved in the establishment and/or maintenance of cell integrity. Involved in skeletal muscle and heart development as well as in the maintenance of heart function. May play a role in vamp3-mediated vesicular transport and recycling of receptor molecules. Involved in the formation and regulation of the tight junction (TJ) paracellular permeability barrier in epithelial cells. May induce primordial adhesive contact and aggregation of epithelial cells in a Ca(2+)-independent manner. May be involved in epithelial movement during corneal sheet formation and regeneration. May play a role in the regulation of cell shape and movement by modulating the Rho-GTPase activity. May also be involved in striated muscle regeneration and in the regulation of cell spreading. The polypeptide is Popeye domain-containing protein 1 (popdc1) (Danio rerio (Zebrafish)).